A 425-amino-acid chain; its full sequence is Glutamyl-tRNA reductase (425 aa).

Residues 49–52, serine 109, 114–116, and glutamine 120 contribute to the substrate site; these read TCNR and EGQ. The active-site Nucleophile is cysteine 50. 189-194 contacts NADP(+); sequence GAGETG.

It belongs to the glutamyl-tRNA reductase family. In terms of assembly, homodimer.

The catalysed reaction is (S)-4-amino-5-oxopentanoate + tRNA(Glu) + NADP(+) = L-glutamyl-tRNA(Glu) + NADPH + H(+). It functions in the pathway porphyrin-containing compound metabolism; protoporphyrin-IX biosynthesis; 5-aminolevulinate from L-glutamyl-tRNA(Glu): step 1/2. The protein operates within porphyrin-containing compound metabolism; chlorophyll biosynthesis. In terms of biological role, catalyzes the NADPH-dependent reduction of glutamyl-tRNA(Glu) to glutamate 1-semialdehyde (GSA). This is Glutamyl-tRNA reductase from Chlorobium phaeovibrioides (strain DSM 265 / 1930) (Prosthecochloris vibrioformis (strain DSM 265)).